A 300-amino-acid chain; its full sequence is Nuclear egress protein 1 (300 aa).

The CCCH-type zinc-finger motif lies at 90 to 217 (CLSLSGMGYY…YIVFPGKALH (128 aa)).

Belongs to the herpesviridae NEC1 protein family. Forms a heterohexameric complex with NEC2. Interacts with capsid vertex specific component 2/CVC2; this interaction directs the capsid to the host inner nuclear membrane to initiate budding. In terms of processing, phosphorylated at serine residues in the N-terminus. This phosphorylation regulates the localization within the inner nuclear membrane.

Its subcellular location is the host nucleus inner membrane. Plays an essential role in virion nuclear egress, the first step of virion release from infected cell. Within the host nucleus, NEC1 interacts with the newly formed capsid through the vertexes and directs it to the inner nuclear membrane by associating with NEC2. Induces the budding of the capsid at the inner nuclear membrane as well as its envelopment into the perinuclear space. There, the NEC1/NEC2 complex promotes the fusion of the enveloped capsid with the outer nuclear membrane and the subsequent release of the viral capsid into the cytoplasm where it will reach the secondary budding sites in the host Golgi or trans-Golgi network. The protein is Nuclear egress protein 1 of Gallid herpesvirus 2 (strain Chicken/Md5/ATCC VR-987) (GaHV-2).